Reading from the N-terminus, the 349-residue chain is Inhibitor of nuclear factor kappa-B kinase-interacting protein (349 aa).

The segment covering 1–11 (MSEVKSRKKSG) has biased composition (basic residues). The disordered stretch occupies residues 1-39 (MSEVKSRKKSGTKGAPAEPGKRNEGGKSPEARGGGGRGW). Residues 19–30 (PGKRNEGGKSPE) are compositionally biased toward basic and acidic residues. A helical transmembrane segment spans residues 45–61 (GVSLLSLGTCLGLAWFV). Asn145 is a glycosylation site (N-linked (GlcNAc...) asparagine). Coiled coils occupy residues 183–216 (GLVTDVTSLTDSVQELENKIEKVEKNTVKNIGDL) and 304–347 (IGRL…HISD). Asn327 carries an N-linked (GlcNAc...) asparagine glycan.

Post-translationally, N-glycosylated.

It localises to the endoplasmic reticulum membrane. Functionally, target of p53/TP53 with pro-apoptotic function. The polypeptide is Inhibitor of nuclear factor kappa-B kinase-interacting protein (IKBIP) (Bos taurus (Bovine)).